We begin with the raw amino-acid sequence, 203 residues long: Holliday junction branch migration complex subunit RuvA (203 aa).

Residues 1–63 (MIFSVRGEVL…EDSMTLYGFS (63 aa)) are domain I. The domain II stretch occupies residues 64–141 (DAENRDLFLA…GPVGASGLTV (78 aa)). The tract at residues 141 to 145 (VGTAA) is flexible linker. A domain III region spans residues 146–203 (DGNAVRGSVVEALVGLGFAAKQAEEATDQVLDGELGKDGAVATSSALRAALSLLGKTR).

Belongs to the RuvA family. As to quaternary structure, homotetramer. Forms an RuvA(8)-RuvB(12)-Holliday junction (HJ) complex. HJ DNA is sandwiched between 2 RuvA tetramers; dsDNA enters through RuvA and exits via RuvB. An RuvB hexamer assembles on each DNA strand where it exits the tetramer. Each RuvB hexamer is contacted by two RuvA subunits (via domain III) on 2 adjacent RuvB subunits; this complex drives branch migration. In the full resolvosome a probable DNA-RuvA(4)-RuvB(12)-RuvC(2) complex forms which resolves the HJ.

It is found in the cytoplasm. Functionally, the RuvA-RuvB-RuvC complex processes Holliday junction (HJ) DNA during genetic recombination and DNA repair, while the RuvA-RuvB complex plays an important role in the rescue of blocked DNA replication forks via replication fork reversal (RFR). RuvA specifically binds to HJ cruciform DNA, conferring on it an open structure. The RuvB hexamer acts as an ATP-dependent pump, pulling dsDNA into and through the RuvAB complex. HJ branch migration allows RuvC to scan DNA until it finds its consensus sequence, where it cleaves and resolves the cruciform DNA. The chain is Holliday junction branch migration complex subunit RuvA from Mycobacterium leprae (strain Br4923).